Here is a 489-residue protein sequence, read N- to C-terminus: Membrane-bound acylglycerophosphatidylinositol O-acyltransferase frj (489 aa).

The next 3 helical transmembrane spans lie at 2–22 (SIDD…GSYV), 40–60 (VLVV…SLAL), and 75–95 (LVTF…DFYF). Residues N331 and H364 contribute to the active site. The next 2 helical transmembrane spans lie at 405–425 (VIFW…FLLS) and 433–453 (FYSS…ALGF).

It belongs to the membrane-bound acyltransferase family.

Its subcellular location is the membrane. The catalysed reaction is a 1-acyl-sn-glycero-3-phospho-(1D-myo-inositol) + (5Z,8Z,11Z,14Z)-eicosatetraenoyl-CoA = a 1-acyl-2-(5Z,8Z,11Z,14Z-eicosatetraenoyl)-sn-glycero-3-phospho-(1D-myo-inositol) + CoA. It catalyses the reaction a 1-acyl-sn-glycero-3-phosphocholine + an acyl-CoA = a 1,2-diacyl-sn-glycero-3-phosphocholine + CoA. It carries out the reaction (9Z)-hexadecenoyl-CoA + 1-hexadecanoyl-sn-glycero-3-phosphocholine = 1-hexadecanoyl-2-(9Z-hexadecenoyl)-sn-glycero-3-phosphocholine + CoA. The enzyme catalyses a 1-acyl-sn-glycero-3-phospho-L-serine + an acyl-CoA = a 1,2-diacyl-sn-glycero-3-phospho-L-serine + CoA. The catalysed reaction is 1-(9Z-octadecenoyl)-sn-glycero-3-phospho-L-serine + (9Z)-hexadecenoyl-CoA = 1-(9Z-octadecenoyl)-2-(9Z-hexadecenoyl)-sn-glycero-3-phospho-L-serine + CoA. It catalyses the reaction a 1-acyl-sn-glycero-3-phosphoethanolamine + an acyl-CoA = a 1,2-diacyl-sn-glycero-3-phosphoethanolamine + CoA. It carries out the reaction 1-hexadecanoyl-sn-glycero-3-phosphoethanolamine + (9Z)-hexadecenoyl-CoA = 1-hexadecanoyl-2-(9Z)-hexadecenoyl-sn-glycero-3-phosphoethanolamine + CoA. Its pathway is lipid metabolism; phospholipid metabolism. Its function is as follows. Acyltransferase that mediates the acylation of lysophospholipids to produce phospholipids (glycerophospholipids). Highest activity with lysophosphatidylinositol (1-acyl-sn-glycero-3-phospho-(1D-myo-inositol) or LPI) producing phosphatidylinositol (1,2-diacyl-sn-glycero-3-phospho-(1D-myo-inositol) or PI) (LPIAT activity), but also converts lysophosphatidylcholine (1-acyl-sn-glycero-3-phosphocholine or LPC) to phosphatidylcholine (1,2-diacyl-sn-glycero-3-phosphocholine or PC) (LPCAT activity), lysophosphatidylserine (1-acyl-2-hydroxy-sn-glycero-3-phospho-L-serine or LPS) to phosphatidylserine (1,2-diacyl-sn-glycero-3-phospho-L-serine or PS) (LPSAT activity), and lysophosphatidylethanolamine (1-acyl-sn-glycero-3-phosphoethanolamine or LPE) producing phosphatidylethanolamine (1,2-diacyl-sn-glycero-3-phosphoethanolamine or PE) (LPEAT activity). Has a preference for unsaturated fatty acid arachidonoyl-CoA ((5Z,8Z,11Z,14Z)-eicosatetraenoyl-CoA). Glycerophospholipids are important structural and functional components of cellular membrane, acyl-chain remodeling regulates the molecular species distribution of glycerophospholipids which can affect membrane fluidity and curvature. The sequence is that of Membrane-bound acylglycerophosphatidylinositol O-acyltransferase frj from Drosophila melanogaster (Fruit fly).